A 914-amino-acid chain; its full sequence is Thyroid peroxidase (914 aa).

The N-terminal stretch at 1 to 31 (MRTLGAMAVMLVVMGTAIFLPFLLRSRDILG) is a signal peptide. At 32–834 (GKTMTSHVIS…TCIDSGRLPR (803 aa)) the chain is on the extracellular side. A glycan (N-linked (GlcNAc...) asparagine) is linked at asparagine 123. Cysteine 136 and cysteine 152 are disulfide-bonded. Aspartate 232 contributes to the heme b binding site. The Proton acceptor role is filled by histidine 233. Residue aspartate 234 coordinates Ca(2+). Cystine bridges form between cysteine 253–cysteine 263 and cysteine 257–cysteine 278. Asparagine 271 and asparagine 299 each carry an N-linked (GlcNAc...) asparagine glycan. Ca(2+) contacts are provided by threonine 313, phenylalanine 315, aspartate 317, and serine 319. Residue asparagine 334 is glycosylated (N-linked (GlcNAc...) asparagine). Heme b is bound by residues glutamate 387 and histidine 482. Intrachain disulfides connect cysteine 586–cysteine 643, cysteine 684–cysteine 709, cysteine 730–cysteine 770, cysteine 756–cysteine 782, cysteine 788–cysteine 802, cysteine 796–cysteine 811, and cysteine 813–cysteine 826. Asparagine 603 carries an N-linked (GlcNAc...) asparagine glycan. One can recognise a Sushi domain in the interval 728–783 (DKCVFPEKVDNGNFVHCEESGKLVLVYSCFHGYKLQGQEQVTCTQNGWDSEPPVCK). Positions 784–827 (DVNECADLTHPPCHSSAKCKNTKGSFQCVCTDPYMLGEDEKTCI) constitute an EGF-like; calcium-binding domain. A helical transmembrane segment spans residues 835 to 859 (ASWVSIALGALLIGGLASLSWTVIC). At 860-914 (RWTHADKKSTLLITERVTMESGFRKSQESGISPQKAEVQDAEQEPAYGSRVLLCE) the chain is on the cytoplasmic side. The interval 882-907 (FRKSQESGISPQKAEVQDAEQEPAYG) is disordered.

The protein belongs to the peroxidase family. XPO subfamily. As to quaternary structure, interacts with DUOX1, DUOX2 and CYBA. The cofactor is Ca(2+). Heme b is required as a cofactor. Post-translationally, heme is covalently bound through a H(2)O(2)-dependent autocatalytic process. Heme insertion is important for the delivery of protein at the cell surface. Cleaved in its N-terminal part.

It is found in the membrane. The catalysed reaction is 2 iodide + H2O2 + 2 H(+) = diiodine + 2 H2O. It carries out the reaction [thyroglobulin]-L-tyrosine + iodide + H2O2 + H(+) = [thyroglobulin]-3-iodo-L-tyrosine + 2 H2O. It catalyses the reaction [thyroglobulin]-3-iodo-L-tyrosine + iodide + H2O2 + H(+) = [thyroglobulin]-3,5-diiodo-L-tyrosine + 2 H2O. The enzyme catalyses 2 [thyroglobulin]-3,5-diiodo-L-tyrosine + H2O2 = [thyroglobulin]-L-thyroxine + [thyroglobulin]-dehydroalanine + 2 H2O. The catalysed reaction is [thyroglobulin]-3-iodo-L-tyrosine + [thyroglobulin]-3,5-diiodo-L-tyrosine + H2O2 = [thyroglobulin]-3,3',5-triiodo-L-thyronine + [thyroglobulin]-dehydroalanine + 2 H2O. Its pathway is hormone biosynthesis; thyroid hormone biosynthesis. Functionally, iodination and coupling of the hormonogenic tyrosines in thyroglobulin to yield the thyroid hormones T(3) and T(4). This chain is Thyroid peroxidase (Tpo), found in Rattus norvegicus (Rat).